We begin with the raw amino-acid sequence, 287 residues long: ATP synthase gamma chain (287 aa).

This sequence belongs to the ATPase gamma chain family. In terms of assembly, F-type ATPases have 2 components, CF(1) - the catalytic core - and CF(0) - the membrane proton channel. CF(1) has five subunits: alpha(3), beta(3), gamma(1), delta(1), epsilon(1). CF(0) has three main subunits: a, b and c.

It localises to the cell inner membrane. Functionally, produces ATP from ADP in the presence of a proton gradient across the membrane. The gamma chain is believed to be important in regulating ATPase activity and the flow of protons through the CF(0) complex. This is ATP synthase gamma chain from Escherichia fergusonii (strain ATCC 35469 / DSM 13698 / CCUG 18766 / IAM 14443 / JCM 21226 / LMG 7866 / NBRC 102419 / NCTC 12128 / CDC 0568-73).